Here is a 269-residue protein sequence, read N- to C-terminus: Tryptophan synthase alpha chain (269 aa).

Catalysis depends on proton acceptor residues glutamate 50 and aspartate 61.

The protein belongs to the TrpA family. In terms of assembly, tetramer of two alpha and two beta chains.

It catalyses the reaction (1S,2R)-1-C-(indol-3-yl)glycerol 3-phosphate + L-serine = D-glyceraldehyde 3-phosphate + L-tryptophan + H2O. It functions in the pathway amino-acid biosynthesis; L-tryptophan biosynthesis; L-tryptophan from chorismate: step 5/5. Its function is as follows. The alpha subunit is responsible for the aldol cleavage of indoleglycerol phosphate to indole and glyceraldehyde 3-phosphate. This Buchnera aphidicola subsp. Baizongia pistaciae (strain Bp) protein is Tryptophan synthase alpha chain.